Reading from the N-terminus, the 374-residue chain is MKFELQTTDGQARRGRLIFERGVVETPAFMPVGTYGTVKGMTPEEVKETGAQILLGNTFHLWLRPGQEIMKLHGDLHGFMQWHGPILTDSGGFQVFSLGAMRKIKEEGVHFRNPINGTPVFLSPEKSMEIQYDLGSDIVMIFDECTPYPADWDYAKRSMEMSLRWAARSRKRFDELQNKNALFGIIQGSIYEDLRDISVKGLVEIGFDGYAVGGLAVGEPKEDMHRILEHVCPQIPQDKPRYLMGVGKPEDLVEGVRRGIDMFDCVMPTRNARNGHLFVTHGVIKIRNAKHKEDTSPLDEQCDCYTCRNYSRAYLHHLDRCNEILGARLNTIHNLRYYQRLMAKIRQAIEEGNLEQFVEDFYQRIGKPVPALSI.

The active-site Proton acceptor is Asp-89. Substrate-binding positions include 89–93 (DSGGF), Asp-143, Gln-187, and Gly-214. Residues 245-251 (GVGKPED) form an RNA binding region. Residue Asp-264 is the Nucleophile of the active site. An RNA binding; important for wobble base 34 recognition region spans residues 269–273 (TRNAR). Positions 302, 304, 307, and 333 each coordinate Zn(2+).

It belongs to the queuine tRNA-ribosyltransferase family. As to quaternary structure, homodimer. Within each dimer, one monomer is responsible for RNA recognition and catalysis, while the other monomer binds to the replacement base PreQ1. Zn(2+) serves as cofactor.

The catalysed reaction is 7-aminomethyl-7-carbaguanine + guanosine(34) in tRNA = 7-aminomethyl-7-carbaguanosine(34) in tRNA + guanine. It functions in the pathway tRNA modification; tRNA-queuosine biosynthesis. Functionally, catalyzes the base-exchange of a guanine (G) residue with the queuine precursor 7-aminomethyl-7-deazaguanine (PreQ1) at position 34 (anticodon wobble position) in tRNAs with GU(N) anticodons (tRNA-Asp, -Asn, -His and -Tyr). Catalysis occurs through a double-displacement mechanism. The nucleophile active site attacks the C1' of nucleotide 34 to detach the guanine base from the RNA, forming a covalent enzyme-RNA intermediate. The proton acceptor active site deprotonates the incoming PreQ1, allowing a nucleophilic attack on the C1' of the ribose to form the product. After dissociation, two additional enzymatic reactions on the tRNA convert PreQ1 to queuine (Q), resulting in the hypermodified nucleoside queuosine (7-(((4,5-cis-dihydroxy-2-cyclopenten-1-yl)amino)methyl)-7-deazaguanosine). The chain is Queuine tRNA-ribosyltransferase from Photorhabdus laumondii subsp. laumondii (strain DSM 15139 / CIP 105565 / TT01) (Photorhabdus luminescens subsp. laumondii).